The chain runs to 400 residues: Na(+)/H(+) antiporter NhaA (400 aa).

A run of 12 helical transmembrane segments spans residues 26–46 (AGGI…NSPL), 71–91 (LIHW…GMEV), 107–127 (IFPA…YWFI), 137–157 (GWAI…ALLS), 166–186 (IFLL…IALF), 189–209 (HGLS…LILL), 212–232 (FKVS…ASVL), 233–253 (KSGV…PLKG), 273–293 (FVIL…GIDV), 299–319 (PLLL…IFGF), 340–360 (IFAV…LASL), and 373–393 (LSRL…YLFL).

The protein belongs to the NhaA Na(+)/H(+) (TC 2.A.33) antiporter family.

It is found in the cell inner membrane. The catalysed reaction is Na(+)(in) + 2 H(+)(out) = Na(+)(out) + 2 H(+)(in). Its function is as follows. Na(+)/H(+) antiporter that extrudes sodium in exchange for external protons. This Haemophilus influenzae (strain 86-028NP) protein is Na(+)/H(+) antiporter NhaA.